The chain runs to 194 residues: Peptidyl-tRNA hydrolase (194 aa).

Residue tyrosine 17 coordinates tRNA. Histidine 22 acts as the Proton acceptor in catalysis. Tyrosine 68, asparagine 70, and asparagine 116 together coordinate tRNA.

It belongs to the PTH family. As to quaternary structure, monomer.

It is found in the cytoplasm. The enzyme catalyses an N-acyl-L-alpha-aminoacyl-tRNA + H2O = an N-acyl-L-amino acid + a tRNA + H(+). Functionally, hydrolyzes ribosome-free peptidyl-tRNAs (with 1 or more amino acids incorporated), which drop off the ribosome during protein synthesis, or as a result of ribosome stalling. Its function is as follows. Catalyzes the release of premature peptidyl moieties from peptidyl-tRNA molecules trapped in stalled 50S ribosomal subunits, and thus maintains levels of free tRNAs and 50S ribosomes. This chain is Peptidyl-tRNA hydrolase, found in Pseudomonas putida (strain GB-1).